The chain runs to 529 residues: ADP,ATP carrier protein 1 (529 aa).

Transmembrane regions (helical) follow at residues 24–44 (LKKV…YTIL), 63–83 (IPFI…LIYA), 93–113 (ALFY…PLVI), 124–144 (DFAD…IAML), 149–169 (FAAF…LMFW), 184–204 (FYAL…PAIV), 220–240 (WGVT…IIAA), 284–304 (YMLL…LVEV), 322–342 (AFMG…MLFI), 356–376 (ALVT…LVIF), 381–401 (TGLV…VGAV), and 463–483 (ISAM…VWLT). The segment covering 509–520 (AAEKEASPAAKE) has biased composition (low complexity). A disordered region spans residues 509–529 (AAEKEASPAAKEVSPAIEGVS).

The protein belongs to the ADP/ATP translocase tlc family.

The protein localises to the cell membrane. In Chlamydia muridarum (strain MoPn / Nigg), this protein is ADP,ATP carrier protein 1 (tlcA).